The sequence spans 62 residues: Synergistic-type venom protein C8S2, chain 1 (62 aa).

Cystine bridges form between Cys3–Cys24, Cys17–Cys42, and Cys46–Cys57.

It belongs to the three-finger toxin family. Short-chain subfamily. Aminergic toxin sub-subfamily. In terms of assembly, heterodimer of C8S2 chain 1 and chain 2 (AC P01411); disulfide-linked. As to expression, expressed by the venom gland.

It localises to the secreted. This protein shows a synergetic toxic effect in that it enhances the toxicity of other toxins. This Dendroaspis angusticeps (Eastern green mamba) protein is Synergistic-type venom protein C8S2, chain 1.